Here is a 312-residue protein sequence, read N- to C-terminus: Eukaryotic translation initiation factor 2 subunit 2 (312 aa).

Disordered regions lie at residues 26–104 (AALG…NLDM) and 125–146 (ADQADDDKSEDKENDEDNSSTW). S44 is modified (phosphoserine). Acidic residues-rich tracts occupy residues 90–102 (AASEEPEEEEINL) and 125–142 (ADQADDDKSEDKENDEDN). A Phosphoserine modification is found at S133. Position 145 is a phosphothreonine (T145). A C4-type zinc finger spans residues 260–284 (CHTCRSPETILQKDTRLFFLQCESC).

This sequence belongs to the eIF-2-beta/eIF-5 family. As to quaternary structure, eukaryotic translation initiation factor 2 eIF2 is a heterotrimeric complex composed of an alpha, a beta and a gamma subunit.

The protein resides in the cytoplasm. It localises to the cytosol. Component of the eIF2 complex that functions in the early steps of protein synthesis by forming a ternary complex with GTP and initiator tRNA. This complex binds to a 40S ribosomal subunit, followed by mRNA binding to form a 43S pre-initiation complex (43S PIC). Junction of the 60S ribosomal subunit to form the 80S initiation complex is preceded by hydrolysis of the GTP bound to eIF2 and release of an eIF2-GDP binary complex. In order for eIF2 to recycle and catalyze another round of initiation, the GDP bound to eIF2 must exchange with GTP by way of a reaction catalyzed by eIF2B. The sequence is that of Eukaryotic translation initiation factor 2 subunit 2 from Drosophila melanogaster (Fruit fly).